The chain runs to 269 residues: Eukaryotic translation initiation factor 3 subunit G-1 (269 aa).

Positions 188 to 266 constitute an RRM domain; the sequence is AAIRISNLSE…LILSVEWSKP (79 aa).

It belongs to the eIF-3 subunit G family. Component of the eukaryotic translation initiation factor 3 (eIF-3) complex. The eIF-3 complex interacts with pix.

The protein resides in the cytoplasm. Its function is as follows. RNA-binding component of the eukaryotic translation initiation factor 3 (eIF-3) complex, which is involved in protein synthesis of a specialized repertoire of mRNAs and, together with other initiation factors, stimulates binding of mRNA and methionyl-tRNAi to the 40S ribosome. The eIF-3 complex specifically targets and initiates translation of a subset of mRNAs involved in cell proliferation. This subunit can bind 18S rRNA. This chain is Eukaryotic translation initiation factor 3 subunit G-1, found in Drosophila grimshawi (Hawaiian fruit fly).